The chain runs to 190 residues: ATP synthase subunit b 1 (190 aa).

Residues 35–55 (DFVVLLGFLLFLAILFYFGVP) traverse the membrane as a helical segment.

Belongs to the ATPase B chain family. As to quaternary structure, F-type ATPases have 2 components, F(1) - the catalytic core - and F(0) - the membrane proton channel. F(1) has five subunits: alpha(3), beta(3), gamma(1), delta(1), epsilon(1). F(0) has three main subunits: a(1), b(2) and c(10-14). The alpha and beta chains form an alternating ring which encloses part of the gamma chain. F(1) is attached to F(0) by a central stalk formed by the gamma and epsilon chains, while a peripheral stalk is formed by the delta and b chains.

The protein resides in the cell inner membrane. Its function is as follows. F(1)F(0) ATP synthase produces ATP from ADP in the presence of a proton or sodium gradient. F-type ATPases consist of two structural domains, F(1) containing the extramembraneous catalytic core and F(0) containing the membrane proton channel, linked together by a central stalk and a peripheral stalk. During catalysis, ATP synthesis in the catalytic domain of F(1) is coupled via a rotary mechanism of the central stalk subunits to proton translocation. In terms of biological role, component of the F(0) channel, it forms part of the peripheral stalk, linking F(1) to F(0). In Jannaschia sp. (strain CCS1), this protein is ATP synthase subunit b 1.